We begin with the raw amino-acid sequence, 254 residues long: Phosphoglycerate mutase 1 (254 aa).

Substrate is bound by residues 10–17 (RHGESAWN) and 23–24 (SG). The Tele-phosphohistidine intermediate role is filled by His11. Phosphoserine is present on residues Ser14 and Ser23. Tyr26 bears the Phosphotyrosine mark. Ser31 carries the phosphoserine modification. Substrate contacts are provided by residues Arg62, 89–92 (ERHY), and Lys100. Glu89 serves as the catalytic Proton donor/acceptor. Position 106 is an N6-acetyllysine (Lys106). Residue 116–117 (RR) participates in substrate binding. A Phosphoserine modification is found at Ser118. Position 187–188 (187–188 (GN)) interacts with substrate. Lys251 bears the N6-acetyllysine; alternate mark. Lys251 is subject to N6-succinyllysine; alternate. Lys253 and Lys254 each carry N6-acetyllysine.

This sequence belongs to the phosphoglycerate mutase family. BPG-dependent PGAM subfamily. Homodimer. In terms of processing, acetylated at Lys-253, Lys-253 and Lys-254 under high glucose condition. Acetylation increases catalytic activity. Under glucose restriction SIRT1 levels dramatically increase and it deacetylates the enzyme. Expressed in the liver and brain. Not found in the muscle.

The enzyme catalyses (2R)-2-phosphoglycerate = (2R)-3-phosphoglycerate. It catalyses the reaction (2R)-3-phospho-glyceroyl phosphate = (2R)-2,3-bisphosphoglycerate + H(+). In terms of biological role, catalyzes the interconversion of 2-phosphoglycerate and 3-phosphoglyceratea crucial step in glycolysis, by using 2,3-bisphosphoglycerate. Also catalyzes the interconversion of (2R)-2,3-bisphosphoglycerate and (2R)-3-phospho-glyceroyl phosphate. The sequence is that of Phosphoglycerate mutase 1 from Homo sapiens (Human).